The following is a 254-amino-acid chain: tRNA (guanine-N(7)-)-methyltransferase (254 aa).

The segment at 1–34 (MNTNTPAHPPEGAPLSEATQAALASAEHAPDSPG) is disordered. Residues Glu-87, Glu-112, Asp-139, and Asp-162 each coordinate S-adenosyl-L-methionine. Residue Asp-162 is part of the active site. Substrate is bound by residues Lys-166, Asp-198, and 233-236 (TKFE).

This sequence belongs to the class I-like SAM-binding methyltransferase superfamily. TrmB family.

It catalyses the reaction guanosine(46) in tRNA + S-adenosyl-L-methionine = N(7)-methylguanosine(46) in tRNA + S-adenosyl-L-homocysteine. Its pathway is tRNA modification; N(7)-methylguanine-tRNA biosynthesis. In terms of biological role, catalyzes the formation of N(7)-methylguanine at position 46 (m7G46) in tRNA. This is tRNA (guanine-N(7)-)-methyltransferase from Bordetella bronchiseptica (strain ATCC BAA-588 / NCTC 13252 / RB50) (Alcaligenes bronchisepticus).